Consider the following 581-residue polypeptide: Probable peptidoglycan D,D-transpeptidase PenA (581 aa).

A helical transmembrane segment spans residues 28 to 48 (ISFVLMAIAVLFAGLIARGLY). The Acyl-ester intermediate role is filled by Ser-310.

It belongs to the transpeptidase family. FtsI subfamily.

Its subcellular location is the cell inner membrane. It carries out the reaction Preferential cleavage: (Ac)2-L-Lys-D-Ala-|-D-Ala. Also transpeptidation of peptidyl-alanyl moieties that are N-acyl substituents of D-alanine.. Its pathway is cell wall biogenesis; peptidoglycan biosynthesis. Its function is as follows. Catalyzes cross-linking of the peptidoglycan cell wall at the division septum. This Neisseria meningitidis serogroup A / serotype 4A (strain DSM 15465 / Z2491) protein is Probable peptidoglycan D,D-transpeptidase PenA.